Reading from the N-terminus, the 184-residue chain is NADH-quinone oxidoreductase subunit B 1 (184 aa).

The [4Fe-4S] cluster site is built by cysteine 37, cysteine 38, cysteine 103, and cysteine 132.

It belongs to the complex I 20 kDa subunit family. In terms of assembly, NDH-1 is composed of 14 different subunits. Subunits NuoB, C, D, E, F, and G constitute the peripheral sector of the complex. The cofactor is [4Fe-4S] cluster.

It is found in the cell membrane. The catalysed reaction is a quinone + NADH + 5 H(+)(in) = a quinol + NAD(+) + 4 H(+)(out). Its function is as follows. NDH-1 shuttles electrons from NADH, via FMN and iron-sulfur (Fe-S) centers, to quinones in the respiratory chain. The immediate electron acceptor for the enzyme in this species is believed to be a menaquinone. Couples the redox reaction to proton translocation (for every two electrons transferred, four hydrogen ions are translocated across the cytoplasmic membrane), and thus conserves the redox energy in a proton gradient. This chain is NADH-quinone oxidoreductase subunit B 1, found in Streptomyces griseus subsp. griseus (strain JCM 4626 / CBS 651.72 / NBRC 13350 / KCC S-0626 / ISP 5235).